Here is a 159-residue protein sequence, read N- to C-terminus: Endoribonuclease YbeY (159 aa).

Zn(2+)-binding residues include histidine 125, histidine 129, and histidine 135.

The protein belongs to the endoribonuclease YbeY family. Zn(2+) serves as cofactor.

The protein resides in the cytoplasm. Its function is as follows. Single strand-specific metallo-endoribonuclease involved in late-stage 70S ribosome quality control and in maturation of the 3' terminus of the 16S rRNA. This Brevibacillus brevis (strain 47 / JCM 6285 / NBRC 100599) protein is Endoribonuclease YbeY.